Reading from the N-terminus, the 152-residue chain is Protein-export protein SecB (152 aa).

It belongs to the SecB family. In terms of assembly, homotetramer, a dimer of dimers. One homotetramer interacts with 1 SecA dimer.

It is found in the cytoplasm. Functionally, one of the proteins required for the normal export of preproteins out of the cell cytoplasm. It is a molecular chaperone that binds to a subset of precursor proteins, maintaining them in a translocation-competent state. It also specifically binds to its receptor SecA. This is Protein-export protein SecB from Rickettsia typhi (strain ATCC VR-144 / Wilmington).